The sequence spans 295 residues: Transcription factor MYB34 (295 aa).

HTH myb-type domains are found at residues 9–61 (EEGI…ANYL) and 62–116 (RPDI…KKRL). 2 consecutive DNA-binding regions (H-T-H motif) follow at residues 37-61 (WRTL…ANYL) and 89-112 (WAAI…NTNL).

In terms of assembly, can form complexes with MYC2, MYC3 or MYC4. Expressed in trichomes.

It localises to the nucleus. Transcription factor involved in tryptophan gene activation and in indole-3-acetic acid (IAA) and indolic glucosinolates (IG) biosynthesis. Acts as a direct transcriptional activator of both Trp synthesis genes and Trp secondary metabolism genes. The sequence is that of Transcription factor MYB34 (MYB34) from Arabidopsis thaliana (Mouse-ear cress).